Here is an 827-residue protein sequence, read N- to C-terminus: SID1 transmembrane family member 1 (827 aa).

A signal peptide spans 1–19; it reads MLDCLRLALLCALPWLLRA. Topologically, residues 20–309 are extracellular; that stretch reads AVPGHQEEPL…SIKESVYVKS (290 aa). Residues Asn-67, Asn-83, Asn-136, and Asn-282 are each glycosylated (N-linked (GlcNAc...) asparagine). The helical transmembrane segment at 310–330 threads the bilayer; sequence SLFSIFVFLSFYLGCLLVVLV. Residues 331–442 are Cytoplasmic-facing; sequence HHVRFQRKSI…DRRIVSKKYK (112 aa). The interval 344 to 409 is disordered; sequence FGSSDGSGNM…VEESDFDTMP (66 aa). Residues 375-386 show a composition bias toward low complexity; sequence SSSSPGRQMSSS. Over residues 398 to 409 the composition is skewed to acidic residues; the sequence is SSVEESDFDTMP. A helical membrane pass occupies residues 443-463; sequence IYFWNIITIAVFYALPVMQLV. At 464–494 the chain is on the extracellular side; that stretch reads ITYQTVVNVTGNQDICYYNFLCAHPLGVLSA. Asn-471 carries an N-linked (GlcNAc...) asparagine glycan. A helical membrane pass occupies residues 495–515; it reads FNNILSNLGHVLLGFLFLLIV. Residues 516 to 541 lie on the Cytoplasmic side of the membrane; that stretch reads LRRDLLHRRALEAKDIFAMEYGIPKH. Residues 542–562 form a helical membrane-spanning segment; the sequence is FGLFYAMGIALMMEGVLSACY. Over 563–572 the chain is Extracellular; it reads HVCPNYSNFQ. An N-linked (GlcNAc...) asparagine glycan is attached at Asn-567. Residues 573-590 traverse the membrane as a helical segment; the sequence is FDTSFMYMIAGLCMLKLY. Topologically, residues 591–600 are cytoplasmic; the sequence is QTRHPDINAS. The helical transmembrane segment at 601-621 threads the bilayer; it reads AYSAYASFAVVITLTVLGVVF. Residues 622–626 are Extracellular-facing; it reads GKNDV. A helical membrane pass occupies residues 627–647; that stretch reads WFWIIFSAIHILSSLALSTQI. The Cytoplasmic portion of the chain corresponds to 648 to 683; that stretch reads YYMGRFKIDLGIFRRAAMVFYTDCIQQCSRPLYMDR. A helical membrane pass occupies residues 684–704; the sequence is MVLLIVGNLVNWSFAFFGLIY. Over 705–710 the chain is Extracellular; that stretch reads RPRDFA. Residues 711–731 form a helical membrane-spanning segment; sequence SYMLGIFICNLLLYLAFYIIM. The Cytoplasmic portion of the chain corresponds to 732-741; that stretch reads KLRSSEKVLP. A helical membrane pass occupies residues 742 to 762; that stretch reads LPVFCIAATAVVWAAALYFFF. The Extracellular segment spans residues 763-791; that stretch reads QNLSSWEGTPAESREKNRECVLLDFFDDH. N-linked (GlcNAc...) asparagine glycosylation is present at Asn-764. Residues 792-812 form a helical membrane-spanning segment; sequence DIWHFLSATALFFSFLVLLTL. The Cytoplasmic portion of the chain corresponds to 813 to 827; the sequence is DDDLDVVRRDQIPVF.

It belongs to the SID1 family.

It is found in the membrane. Functionally, in vitro binds long double-stranded RNA (dsRNA) (500 and 700 base pairs), but not dsRNA shorter than 300 bp. Not involved in RNA autophagy, a process in which RNA is directly imported into lysosomes in an ATP-dependent manner, and degraded. This chain is SID1 transmembrane family member 1 (Sidt1), found in Mus musculus (Mouse).